A 389-amino-acid chain; its full sequence is MKWLVILGLVALSECLVIIPLTKVKSIRENLREKDLLLNFLKEHPYNMIQKFGLKGSLCSPKISCLRLWNYLDMVYVGNITIGTPPQLFSVIFDTASSDLWVPSNQCHSRACVTHRSFNPTLSSTFQSSNRTVKLAPHSGLVSGLLGYDTVQIGRFKSENQAFGLSQSEPVKELENAFFDGVLGLGYPSLAIQGTTPVFDNLRKQGQIPEPVFALYLSTNTKKGSVLMIGGVDNNFFTGNLKWVPLSARNYWQITLDRITWRGVVVGCTRGCQAILDSGSAFLLGPSRQISSIQKIIQARFIENEYQVRCCARTTLADFIFTINNVQYPVPARAYIRKGSTPRRCYSNFSGGTESLGKEETWILGEVFLRLYFTVFDRGQNRIGLRIAV.

The signal sequence occupies residues Met-1–Cys-15. The 311-residue stretch at Tyr-76–Arg-386 folds into the Peptidase A1 domain. Asn-79 carries an N-linked (GlcNAc...) asparagine glycan. Asp-94 is a catalytic residue. Cys-107 and Cys-112 are joined by a disulfide. An N-linked (GlcNAc...) asparagine glycan is attached at Asn-130. Residues Cys-268 and Cys-272 are joined by a disulfide bond. Asp-277 is an active-site residue. Cys-311 and Cys-345 are joined by a disulfide. Residue Asn-348 is glycosylated (N-linked (GlcNAc...) asparagine).

This sequence belongs to the peptidase A1 family. In terms of tissue distribution, expressed throughout the chorion, with the signal localized exclusively over the trophectoderm.

It localises to the secreted. It is found in the extracellular space. Appears to be proteolytically inactive. In Sus scrofa (Pig), this protein is Pregnancy-associated glycoprotein 1.